The following is a 67-amino-acid chain: Tachystatin-A2 (67 aa).

The first 23 residues, 1 to 23, serve as a signal peptide directing secretion; sequence MKLQNTLILIGCLFLMGAMIGDA. Intrachain disulfides connect C27/C47, C34/C52, and C46/C64.

Granular hemocytes, small secretory granules.

It is found in the secreted. In terms of biological role, exhibits stronger antimicrobial activity against the Gram-positive bacteria (S.aureus (IC(50)=4.2 ug/ml)) and fungi (C.albicans (IC(50)=3.0 ug/ml) and P.pastoris (IC(50)=0.5 ug/ml)) than Gram-negative bacteria (E.coli (IC(50)=25 ug/ml)). Binds to chitin (8.4 uM are required to obtain 50% of binding). Does not cause hemolysis on sheep erythrocytes. Has no blocking activity on the P-type calcium channel. Has also been shown to weakly inhibit Kv1.2/KCNA2 voltage-gated potassium channels and TRPV1 receptors. The sequence is that of Tachystatin-A2 from Tachypleus tridentatus (Japanese horseshoe crab).